The sequence spans 249 residues: 1-(5-phosphoribosyl)-5-[(5-phosphoribosylamino)methylideneamino] imidazole-4-carboxamide isomerase (249 aa).

Residue D11 is the Proton acceptor of the active site. D132 acts as the Proton donor in catalysis.

The protein belongs to the HisA/HisF family.

It is found in the cytoplasm. The catalysed reaction is 1-(5-phospho-beta-D-ribosyl)-5-[(5-phospho-beta-D-ribosylamino)methylideneamino]imidazole-4-carboxamide = 5-[(5-phospho-1-deoxy-D-ribulos-1-ylimino)methylamino]-1-(5-phospho-beta-D-ribosyl)imidazole-4-carboxamide. It functions in the pathway amino-acid biosynthesis; L-histidine biosynthesis; L-histidine from 5-phospho-alpha-D-ribose 1-diphosphate: step 4/9. The protein is 1-(5-phosphoribosyl)-5-[(5-phosphoribosylamino)methylideneamino] imidazole-4-carboxamide isomerase of Nitrobacter winogradskyi (strain ATCC 25391 / DSM 10237 / CIP 104748 / NCIMB 11846 / Nb-255).